The following is a 273-amino-acid chain: Alcohol dehydrogenase-related 31 kDa protein (273 aa).

Position 11 to 34 (11 to 34 (YVADCGGIALETCKVLMTKNIAKL)) interacts with NAD(+). Ser139 is a substrate binding site. Catalysis depends on Tyr152, which acts as the Proton acceptor.

Belongs to the short-chain dehydrogenases/reductases (SDR) family.

In Drosophila immigrans (Fruit fly), this protein is Alcohol dehydrogenase-related 31 kDa protein (Adhr).